Reading from the N-terminus, the 111-residue chain is Putative membrane protein insertion efficiency factor (111 aa).

The protein belongs to the UPF0161 family.

It is found in the cell inner membrane. Its function is as follows. Could be involved in insertion of integral membrane proteins into the membrane. This chain is Putative membrane protein insertion efficiency factor, found in Methylobacterium nodulans (strain LMG 21967 / CNCM I-2342 / ORS 2060).